A 217-amino-acid chain; its full sequence is Grancalcin (217 aa).

4 consecutive EF-hand domains span residues 48-83 (SSAGDSVYTYFSAVAGQDGEVDAEELQRCLTQSGIN), 89-122 (FSLETCRIMIAMLDRDHTGKMGFNAFKELWAALN), 119-154 (AALNAWKENFMTVDQDGSGTVEHHELRQAIGLMGYR), and 155-180 (LSPQTLTTIVKRYSKNGRIFFDDYVA). 3 residues coordinate Ca(2+): aspartate 65, aspartate 69, and glutamate 71. Positions 132, 134, 136, 138, and 143 each coordinate Ca(2+).

Homodimer. Interacts with SRI and LCP1. Detected in neutrophils and macrophages (at protein level). Highly expressed in bone marrow.

The protein localises to the cytoplasm. It localises to the cytoplasmic granule membrane. Calcium-binding protein that may play a role in the adhesion of neutrophils to fibronectin. May play a role in the formation of focal adhesions. The sequence is that of Grancalcin (GCA) from Homo sapiens (Human).